A 77-amino-acid chain; its full sequence is DNA-directed RNA polymerase subunit epsilon (77 aa).

This sequence belongs to the RNA polymerase subunit epsilon family. In terms of assembly, RNAP is composed of a core of 2 alpha, a beta and a beta' subunit. The core is associated with a delta subunit, and at least one of epsilon or omega. When a sigma factor is associated with the core the holoenzyme is formed, which can initiate transcription.

It carries out the reaction RNA(n) + a ribonucleoside 5'-triphosphate = RNA(n+1) + diphosphate. Its function is as follows. A non-essential component of RNA polymerase (RNAP). This Streptococcus pneumoniae (strain Hungary19A-6) protein is DNA-directed RNA polymerase subunit epsilon.